Reading from the N-terminus, the 727-residue chain is Cyclin-T1 (727 aa).

Ser-117 is subject to Phosphoserine. The Nuclear localization signal, and interaction with Tat-TAR RNA signature appears at 253 to 270 (KRIRNWRACQAAKKTKAD). A compositionally biased stretch (low complexity) spans 302 to 322 (MSTSSTTSTVPSLPTTEESSS). Residues 302–326 (MSTSSTTSTVPSLPTTEESSSNLSG) form a disordered region. Lys-343 is covalently cross-linked (Glycyl lysine isopeptide (Lys-Gly) (interchain with G-Cter in SUMO2)). A coiled-coil region spans residues 386-427 (SAKVSLKEYRAKHAEELAAQKRQLENMEANVKSQYAYAAQNL). A Phosphoserine modification is found at Ser-390. Lys-392 is subject to N6-acetyllysine. A Glycyl lysine isopeptide (Lys-Gly) (interchain with G-Cter in SUMO2) cross-link involves residue Lys-417. ADP-ribosylserine is present on residues Ser-418, Ser-476, and Ser-477. A histidine-rich domain (HRD) region spans residues 482 to 552 (IKMRIKVHAA…RPGDPKHSSQ (71 aa)). A Glycyl lysine isopeptide (Lys-Gly) (interchain with G-Cter in SUMO2) cross-link involves residue Lys-483. Residues 486-508 (IKVHAAPDKHNSIDDSVTKSREH) are compositionally biased toward basic and acidic residues. Disordered regions lie at residues 486–591 (IKVH…DHPA) and 692–727 (LNPRAGGMPSRSGNTDKPRLPPLPSEPPPPLPPLPK). An N6-(ADP-ribosyl)lysine modification is found at Lys-487. The residue at position 489 (His-489) is an ADP-ribosylhistidine. 2 positions are modified to phosphoserine: Ser-497 and Ser-501. Basic residues predominate over residues 509–532 (KEKHKTHPSNHHHHHNHHSHKHSH). His-532 is subject to ADP-ribosylhistidine. Ser-533, Ser-551, and Ser-554 each carry ADP-ribosylserine. At His-558 the chain carries ADP-ribosylhistidine. Positions 562–572 (SLSSSFSSSSS) are enriched in low complexity. Ser-565 is subject to ADP-ribosylserine. Ser-566 is modified (phosphoserine). Over residues 711-727 (LPPLPSEPPPPLPPLPK) the composition is skewed to pro residues.

Belongs to the cyclin family. Cyclin C subfamily. Cyclin-T1 is the predominant cyclin that associates with CDK9 to form a heterodimer called P-TEFb. P-TEFb forms a complex with AFF4/AF5Q31. Component of a complex which is at least composed of HTATSF1/Tat-SF1, P-TEFb complex, RNA pol II, SUPT5H, and NCL/nucleolin. Component of the 7SK snRNP complex at least composed of P-TEFb (composed of CDK9 and CCNT1/cyclin-T1), HEXIM1, HEXIM2, BCDIN3, SART3 proteins and 7SK and U6 snRNAs. Interacts (via central region) with ZMYND8 (via N-terminus); the interaction is direct and the association appears to occur between homodimeric ZMYND8 and the activated form of the P-TEFb complex. Interacts with BRD4, targets chromatin binding. Interacts with JMJD6. Interacts with MDFIC. Interacts with HSF1. Interacts with HTATSF1. Interacts with TBX21. In terms of processing, ADP-ribosylation on serine residues by PARP1 in response to DNA damage disrupts the phase separation activity of CCNT1, thereby preventing activation of CDK9.

It localises to the nucleus. Regulatory subunit of the cyclin-dependent kinase pair (CDK9/cyclin-T1) complex, also called positive transcription elongation factor B (P-TEFb), which facilitates the transition from abortive to productive elongation by phosphorylating the CTD (C-terminal domain) of the large subunit of RNA polymerase II (RNA Pol II). Required to activate the protein kinase activity of CDK9: acts by mediating formation of liquid-liquid phase separation (LLPS) that enhances binding of P-TEFb to the CTD of RNA Pol II. The polypeptide is Cyclin-T1 (CCNT1) (Equus caballus (Horse)).